The chain runs to 149 residues: Ribonuclease pancreatic (149 aa).

Residues 1-25 (MGLEKSFILFSLLVLVLGWVQPSLG) form the signal peptide. The substrate site is built by Lys32 and Arg35. Residue His37 is the Proton acceptor of the active site. 4 cysteine pairs are disulfide-bonded: Cys51/Cys109, Cys65/Cys120, Cys83/Cys135, and Cys90/Cys97. Substrate is bound by residues 66 to 70 (KPVNT), Lys91, and Arg110. His144 acts as the Proton donor in catalysis.

The protein belongs to the pancreatic ribonuclease family. In terms of assembly, monomer. Interacts with and forms tight 1:1 complexes with RNH1. Dimerization of two such complexes may occur. Interaction with RNH1 inhibits this protein. Pancreas.

Its subcellular location is the secreted. The catalysed reaction is an [RNA] containing cytidine + H2O = an [RNA]-3'-cytidine-3'-phosphate + a 5'-hydroxy-ribonucleotide-3'-[RNA].. The enzyme catalyses an [RNA] containing uridine + H2O = an [RNA]-3'-uridine-3'-phosphate + a 5'-hydroxy-ribonucleotide-3'-[RNA].. Functionally, endonuclease that catalyzes the cleavage of RNA on the 3' side of pyrimidine nucleotides. Acts on single-stranded and double-stranded RNA. The chain is Ribonuclease pancreatic (RNASE1) from Leopoldamys edwardsi (Edwards's long-tailed giant rat).